Here is a 446-residue protein sequence, read N- to C-terminus: Exodeoxyribonuclease 7 large subunit (446 aa).

It belongs to the XseA family. As to quaternary structure, heterooligomer composed of large and small subunits.

The protein resides in the cytoplasm. It carries out the reaction Exonucleolytic cleavage in either 5'- to 3'- or 3'- to 5'-direction to yield nucleoside 5'-phosphates.. Bidirectionally degrades single-stranded DNA into large acid-insoluble oligonucleotides, which are then degraded further into small acid-soluble oligonucleotides. The polypeptide is Exodeoxyribonuclease 7 large subunit (Streptococcus thermophilus (strain ATCC BAA-250 / LMG 18311)).